Here is a 297-residue protein sequence, read N- to C-terminus: Small ribosomal subunit protein uS2 (297 aa).

A disordered region spans residues 276–297; sequence DWASSAPAEGWAGEAPATEAKW.

This sequence belongs to the universal ribosomal protein uS2 family. In terms of assembly, component of the small ribosomal subunit. Mature ribosomes consist of a small (40S) and a large (60S) subunit. The 40S subunit contains about 33 different proteins and 1 molecule of RNA (18S). The 60S subunit contains about 49 different proteins and 3 molecules of RNA (25S, 5.8S and 5S). Interacts with RPS21.

It localises to the cytoplasm. Required for the assembly and/or stability of the 40S ribosomal subunit. Required for the processing of the 20S rRNA-precursor to mature 18S rRNA in a late step of the maturation of 40S ribosomal subunits. The protein is Small ribosomal subunit protein uS2 of Uncinocarpus reesii (strain UAMH 1704).